We begin with the raw amino-acid sequence, 238 residues long: Fatty acid metabolism regulator protein (238 aa).

The HTH gntR-type domain maps to 6–74; the sequence is KGPASFAEKY…HGKPTRVNNF (69 aa). The segment at residues 34–53 is a DNA-binding region (H-T-H motif); that stretch reads ERELSELIGVTRTTLREVLQ.

As to quaternary structure, homodimer.

It localises to the cytoplasm. Multifunctional regulator of fatty acid metabolism. The protein is Fatty acid metabolism regulator protein of Shewanella baltica (strain OS155 / ATCC BAA-1091).